We begin with the raw amino-acid sequence, 50 residues long: Defensin-like protein 1 (50 aa).

4 disulfides stabilise this stretch: Cys2–Cys50, Cys14–Cys35, Cys20–Cys44, and Cys24–Cys46.

This sequence belongs to the DEFL family.

Its subcellular location is the secreted. Its function is as follows. Possesses antimicrobial activity sensitive to inorganic cations. Binds specifically to the fungal plasma membrane. Has no inhibitory effect on insect gut alpha-amylase. The protein is Defensin-like protein 1 of Aesculus hippocastanum (Horse chestnut).